Reading from the N-terminus, the 422-residue chain is Alcohol dehydrogenase 4 (422 aa).

Residues 1–29 (MSILRSPFRLIRSPARFFPSLFHSSCNQS) constitute a mitochondrion transit peptide. NAD(+)-binding residues include D82, N114, G141, S142, T181, T182, T190, F192, K203, and G225. Fe(2+) is bound by residues D237, H241, and H306. H310 and H320 together coordinate NAD(+). H320 provides a ligand contact to Fe(2+).

Belongs to the iron-containing alcohol dehydrogenase family. Requires Zn(2+) as cofactor.

It is found in the mitochondrion matrix. It carries out the reaction a primary alcohol + NAD(+) = an aldehyde + NADH + H(+). The enzyme catalyses a secondary alcohol + NAD(+) = a ketone + NADH + H(+). It catalyses the reaction ethanol + NAD(+) = acetaldehyde + NADH + H(+). Functionally, involved in ethanol oxidation in mitochondria. This Schizosaccharomyces pombe (strain 972 / ATCC 24843) (Fission yeast) protein is Alcohol dehydrogenase 4 (adh4).